Consider the following 150-residue polypeptide: MARSHDTKGSGGLSQRQLRVGEQVRHALAQVLQRGEIRDDLIERTVISVSEVRMSPDLKIATCFITPLGSADPQAVIKALASHAKFIRGRVAPSLAQMKYMPEFRFRPDTSFDNFSKIDALLRSPEVARDLSHDDDEDGGADEAPRNGDE.

Positions 126 to 150 (EVARDLSHDDDEDGGADEAPRNGDE) are disordered.

This sequence belongs to the RbfA family. As to quaternary structure, monomer. Binds 30S ribosomal subunits, but not 50S ribosomal subunits or 70S ribosomes.

It localises to the cytoplasm. One of several proteins that assist in the late maturation steps of the functional core of the 30S ribosomal subunit. Associates with free 30S ribosomal subunits (but not with 30S subunits that are part of 70S ribosomes or polysomes). Required for efficient processing of 16S rRNA. May interact with the 5'-terminal helix region of 16S rRNA. This chain is Ribosome-binding factor A, found in Brucella abortus (strain S19).